Here is a 435-residue protein sequence, read N- to C-terminus: Rho GTPase-activating protein 4 (435 aa).

Residues 1 to 59 (MAKVLKSSQSCHFPSPSSSSSTSCGGGNDGSNRDPHSPFNISRREEEEEEEERSEKERE) are disordered. Residues 7 to 23 (SSQSCHFPSPSSSSSTS) show a composition bias toward low complexity. The CRIB domain occupies 93-106 (IGVPTDVRHVAHVT). A Rho-GAP domain is found at 138–319 (VSTESMQLSY…LIVKTLKDRK (182 aa)). The segment at 321-343 (SRDKLVPASNPSPRDHNGDQSSS) is disordered.

Its function is as follows. Acts as a GTPase activator for the Rac-type GTPase by converting it to an inactive GDP-bound state. Acts as a negative feedback regulator in tolerance to oxygen deprivation which requires ARAC4/ROP2. The chain is Rho GTPase-activating protein 4 (ROPGAP4) from Arabidopsis thaliana (Mouse-ear cress).